Reading from the N-terminus, the 375-residue chain is Anhydro-N-acetylmuramic acid kinase (375 aa).

12–19 (GTSMDGVD) lines the ATP pocket.

It belongs to the anhydro-N-acetylmuramic acid kinase family.

The catalysed reaction is 1,6-anhydro-N-acetyl-beta-muramate + ATP + H2O = N-acetyl-D-muramate 6-phosphate + ADP + H(+). It functions in the pathway amino-sugar metabolism; 1,6-anhydro-N-acetylmuramate degradation. It participates in cell wall biogenesis; peptidoglycan recycling. Catalyzes the specific phosphorylation of 1,6-anhydro-N-acetylmuramic acid (anhMurNAc) with the simultaneous cleavage of the 1,6-anhydro ring, generating MurNAc-6-P. Is required for the utilization of anhMurNAc either imported from the medium or derived from its own cell wall murein, and thus plays a role in cell wall recycling. In Photobacterium profundum (strain SS9), this protein is Anhydro-N-acetylmuramic acid kinase.